A 533-amino-acid chain; its full sequence is Probable polyamine oxidase 5 (533 aa).

The FAD site is built by Glu37, Arg45, Val262, and Glu501.

It belongs to the flavin monoamine oxidase family. FAD serves as cofactor. Expressed in root vasculature, leaves and stems.

The protein resides in the cytoplasm. The enzyme catalyses spermine + O2 + H2O = 3-aminopropanal + spermidine + H2O2. It catalyses the reaction N(1)-acetylspermine + O2 + H2O = 3-acetamidopropanal + spermidine + H2O2. It carries out the reaction norspermine + O2 + H2O = norspermidine + 3-aminopropanal + H2O2. The catalysed reaction is thermospermine + O2 + H2O = 3-aminopropanal + spermidine + H2O2. It functions in the pathway amine and polyamine degradation; spermine degradation. Its function is as follows. Flavoenzyme involved in polyamine back-conversion. Catalyzes the oxidation of the secondary amino group of polyamines, such as spermine and its acetyl derivatives. Substrate preference is spermine &gt; N(1)-acetylspermine &gt; thermospermine &gt; norspermine. Plays an important role in the regulation of polyamine intracellular concentration. Involved in xylem differentiation by controlling thermospermine homeostasis, and participating in the tightly controlled interplay between auxin and cytokinin that is necessary for proper xylem differentiation. Involved in the production of hydrogen peroxide in response to salt and cold stresses. The sequence is that of Probable polyamine oxidase 5 from Arabidopsis thaliana (Mouse-ear cress).